Reading from the N-terminus, the 128-residue chain is Large ribosomal subunit protein eL8 (128 aa).

It belongs to the eukaryotic ribosomal protein eL8 family. Part of the 50S ribosomal subunit. Probably part of the RNase P complex.

It localises to the cytoplasm. Its function is as follows. Multifunctional RNA-binding protein that recognizes the K-turn motif in ribosomal RNA, the RNA component of RNase P, box H/ACA, box C/D and box C'/D' sRNAs. This chain is Large ribosomal subunit protein eL8, found in Nitrosopumilus maritimus (strain SCM1).